The sequence spans 140 residues: Large ribosomal subunit protein uL11 (140 aa).

The protein belongs to the universal ribosomal protein uL11 family. As to quaternary structure, part of the ribosomal stalk of the 50S ribosomal subunit. Interacts with L10 and the large rRNA to form the base of the stalk. L10 forms an elongated spine to which L12 dimers bind in a sequential fashion forming a multimeric L10(L12)X complex. Post-translationally, one or more lysine residues are methylated.

Its function is as follows. Forms part of the ribosomal stalk which helps the ribosome interact with GTP-bound translation factors. This Nitratidesulfovibrio vulgaris (strain DSM 19637 / Miyazaki F) (Desulfovibrio vulgaris) protein is Large ribosomal subunit protein uL11.